A 141-amino-acid polypeptide reads, in one-letter code: ATP synthase epsilon chain (141 aa).

Belongs to the ATPase epsilon chain family. In terms of assembly, F-type ATPases have 2 components, CF(1) - the catalytic core - and CF(0) - the membrane proton channel. CF(1) has five subunits: alpha(3), beta(3), gamma(1), delta(1), epsilon(1). CF(0) has three main subunits: a, b and c.

It localises to the cell inner membrane. Functionally, produces ATP from ADP in the presence of a proton gradient across the membrane. The chain is ATP synthase epsilon chain from Gluconacetobacter diazotrophicus (strain ATCC 49037 / DSM 5601 / CCUG 37298 / CIP 103539 / LMG 7603 / PAl5).